Here is an 830-residue protein sequence, read N- to C-terminus: Periplasmic nitrate reductase (830 aa).

Positions 1–31 (MKLSRRDFMKANAAVAAAAAAGMTIPTVAKA) form a signal peptide, tat-type signal. A 4Fe-4S Mo/W bis-MGD-type domain is found at 39–95 (IKWDKAPCRFCGTGCGVLVGTQNGRIVASQGDPDSPVNRGLNCIKGYFLPKIMYGKD). The [4Fe-4S] cluster site is built by Cys-46, Cys-49, Cys-53, and Cys-81. Mo-bis(molybdopterin guanine dinucleotide) is bound by residues Lys-83, Gln-150, Asn-175, Cys-179, 212-219 (WGSNMAEM), 243-247 (STYEH), 262-264 (QTD), Met-372, Gln-376, Asn-482, 508-509 (SD), Lys-531, Asp-558, and 718-727 (TGRVLEHWHT). Residue Phe-794 coordinates substrate. Residues Asn-802 and Lys-819 each coordinate Mo-bis(molybdopterin guanine dinucleotide).

Belongs to the prokaryotic molybdopterin-containing oxidoreductase family. NasA/NapA/NarB subfamily. Component of the periplasmic nitrate reductase NapAB complex composed of NapA and NapB. The cofactor is [4Fe-4S] cluster. Mo-bis(molybdopterin guanine dinucleotide) is required as a cofactor. Predicted to be exported by the Tat system. The position of the signal peptide cleavage has not been experimentally proven.

It localises to the periplasm. It carries out the reaction 2 Fe(II)-[cytochrome] + nitrate + 2 H(+) = 2 Fe(III)-[cytochrome] + nitrite + H2O. Its function is as follows. Catalytic subunit of the periplasmic nitrate reductase complex NapAB. Receives electrons from NapB and catalyzes the reduction of nitrate to nitrite. The chain is Periplasmic nitrate reductase from Yersinia pseudotuberculosis serotype IB (strain PB1/+).